A 306-amino-acid chain; its full sequence is MACNCQLMQDTPLLKFPCPRLILLFVLLIRLSQVSSDVDEQLSKSVKDKVLLPCRYNSPHEDESEDRIYWQKHDKVVLSVIAGKLKVWPEYKNRTLYDNTTYSLIILGLVLSDRGTYSCVVQKKERGTYEVKHLALVKLSIKADFSTPNITESGNPSADTKRITCFASGGFPKPRFSWLENGRELPGINTTISQDPESELYTISSQLDFNTTRNHTIKCLIKYGDAHVSEDFTWEKPPEDPPDSKNTLVLFGAGFGAVITVVVIVVIIKCFCKHRSCFRRNEASRETNNSLTFGPEEALAEQTVFL.

The signal sequence occupies residues 1-37 (MACNCQLMQDTPLLKFPCPRLILLFVLLIRLSQVSSD). The 98-residue stretch at 38–135 (VDEQLSKSVK…RGTYEVKHLA (98 aa)) folds into the Ig-like V-type domain. Topologically, residues 38–246 (VDEQLSKSVK…PPEDPPDSKN (209 aa)) are extracellular. An intrachain disulfide couples Cys54 to Cys119. 6 N-linked (GlcNAc...) asparagine glycosylation sites follow: Asn93, Asn99, Asn149, Asn189, Asn210, and Asn214. In terms of domain architecture, Ig-like C2-type spans 148–229 (PNITESGNPS…LIKYGDAHVS (82 aa)). Cys165 and Cys219 are disulfide-bonded. Residues 227–246 (HVSEDFTWEKPPEDPPDSKN) are ig-hinge-like. Residues 247–268 (TLVLFGAGFGAVITVVVIVVII) traverse the membrane as a helical segment. Residues 269-306 (KCFCKHRSCFRRNEASRETNNSLTFGPEEALAEQTVFL) are Cytoplasmic-facing.

In terms of assembly, homodimer. Interacts with CTLA4; this interaction inhibits T-cell activation. Interacts with PDL1/CD274; this interaction blocks PDL1/PDCD1 binding and thus PDL1 inhibitory function. Interacts with CD28. Expressed on activated B-cells, gamma interferon stimulated monocytes and non-circulating B-cell malignancies.

The protein resides in the cell membrane. In terms of biological role, costimulatory molecule that belongs to the immunoglobulin superfamily that plays an important role in T-lymphocyte activation. Acts as the primary auxiliary signal augmenting the MHC/TCR signal in naive T-cells together with the CD28 receptor which is constitutively expressed on the cell surface of T-cells. In turn, activates different signaling pathways such as NF-kappa-B or MAPK leading to the production of different cytokines. In addition, CD28/CD80 costimulatory signal stimulates glucose metabolism and ATP synthesis of T-cells by activating the PI3K/Akt signaling pathway. Acts also as a regulator of PDL1/PDCD1 interactions to limit excess engagement of PDL1 and its inhibitory role in immune responses. Expressed on B-cells, plays a critical role in regulating interactions between B-cells and T-cells in both early and late germinal center responses, which are crucial for the generation of effective humoral immune responses. This is T-lymphocyte activation antigen CD80 (Cd80) from Mus musculus (Mouse).